The following is a 311-amino-acid chain: tRNA dimethylallyltransferase (311 aa).

10–17 (GPTAVGKS) contacts ATP. 12–17 (TAVGKS) is a binding site for substrate. The interaction with substrate tRNA stretch occupies residues 35-38 (DSMQ).

The protein belongs to the IPP transferase family. In terms of assembly, monomer. Mg(2+) is required as a cofactor.

It catalyses the reaction adenosine(37) in tRNA + dimethylallyl diphosphate = N(6)-dimethylallyladenosine(37) in tRNA + diphosphate. In terms of biological role, catalyzes the transfer of a dimethylallyl group onto the adenine at position 37 in tRNAs that read codons beginning with uridine, leading to the formation of N6-(dimethylallyl)adenosine (i(6)A). This Carboxydothermus hydrogenoformans (strain ATCC BAA-161 / DSM 6008 / Z-2901) protein is tRNA dimethylallyltransferase.